The primary structure comprises 476 residues: Growth/differentiation factor 10 (476 aa).

The N-terminal stretch at 1–29 is a signal peptide; it reads MAPGPARISLGSQLLPMVPLLLLLRGAGC. A propeptide spanning residues 30 to 366 is cleaved from the precursor; the sequence is GHRGPSWSSL…EKTMQKARRR (337 aa). The disordered stretch occupies residues 39–63; it reads LPSAAAGLQGDRDSQQSPGDAAAAL. 3 N-linked (GlcNAc...) asparagine glycosylation sites follow: asparagine 114, asparagine 152, and asparagine 277. A disordered region spans residues 268–301; it reads GDFEPGAAPNSSADPRVRRAAQVSKPLQDNELPG. 3 cysteine pairs are disulfide-bonded: cysteine 374/cysteine 441, cysteine 403/cysteine 473, and cysteine 407/cysteine 475. Asparagine 467 is a glycosylation site (N-linked (GlcNAc...) asparagine).

This sequence belongs to the TGF-beta family. As to quaternary structure, homodimer or heterodimer. Can form a non-covalent complex of the mature region and the pro-region. Highly expressed in epididymal adipose tissue, brain, bone and aorta and to a lesser extent in liver and spleen. Expressed at higher levels in preadipocytes than in mature adipocytes. Strongly expressed in glial cells of the cerebellum.

The protein resides in the secreted. Its function is as follows. Growth factor involved in osteogenesis and adipogenesis. Plays an inhibitory role in the process of osteoblast differentiation via SMAD2/3 pathway. Plays an inhibitory role in the process of adipogenesis. This is Growth/differentiation factor 10 from Mus musculus (Mouse).